The chain runs to 113 residues: U11-theraphotoxin-Hhn1a (113 aa).

The first 21 residues, 1-21 (MNTVRVTFLLVFVLAVSLGQA), serve as a signal peptide directing secretion. A propeptide spanning residues 22–74 (DKDENRMEMQEKTEQGNSYLDFAENLPLQKLEELEAKLLEEDSEESRNSRQKR) is cleaved from the precursor. Residues 60–69 (LEEDSEESRN) are compositionally biased toward basic and acidic residues. The tract at residues 60–83 (LEEDSEESRNSRQKRCIGEGVPCD) is disordered. Intrachain disulfides connect cysteine 75-cysteine 90, cysteine 82-cysteine 95, and cysteine 89-cysteine 110.

This sequence belongs to the neurotoxin 14 (magi-1) family. 01 (HNTX-16) subfamily. In terms of tissue distribution, expressed by the venom gland.

It is found in the secreted. Probable ion channel inhibitor. This chain is U11-theraphotoxin-Hhn1a, found in Cyriopagopus hainanus (Chinese bird spider).